Reading from the N-terminus, the 260-residue chain is MFISSGDAVPSFKGFTLILPAVSVGNVGQLAVDLLISTLNMPRVGYFHTDCLIPMAGNNPYASSTEDAAQLSTSAEVYSHRDLKLAVLQIRAPIIQTKVKSFRKLMISWMKSSGFLRTVLLSSAHAYQRDDQQLHGTPLRYMLSPSLEKEERQRFEELGWREMEKISVFPGISDSEQRLYIPGGGVTKCLYTDCCTEDVPMAVVLIFCSEGDNIPDAFALINCLNDWLHLLEKPTQGSVQWRVPPSWKLLFGSGIPPLLF.

This sequence belongs to the PSMG2 family. In terms of assembly, forms a heterodimer with psmg1. In terms of processing, degraded by the proteasome upon completion of 20S proteasome maturation.

The protein resides in the nucleus. Functionally, chaperone protein which promotes assembly of the 20S proteasome as part of a heterodimer with psmg1. This Danio rerio (Zebrafish) protein is Proteasome assembly chaperone 2.